We begin with the raw amino-acid sequence, 560 residues long: MNNNIINLIAAIILSLSIIFGWQYFVVKPEQKKQQQQIAVQKAENLKKQQLKALVEPATDIVVQEESGVQRIKIESESLTGSISLKGLRFDDLILKKYKQDLSNNSPEVRLFSPANTENAYFAEIGLVSNLSSVKLPNNDTIWNSDSEILSPEKPVNLFWVNEDGVKFLVTITVDENYLFTIEQTIVNNSDKELPIQSYGLINRKYTAVEKAVNILHQGPIGCIDENLKEYSYDDIKDKKSEKFAASKVDWIGITDKYWLSSLIPDKSSNYSSNFNYALKQGTERYQVDFISPVQIIKPGENFSIKSRIFAGAKKVDLLDKYEKQYDIKLFDRAIDFGWFYIITKPVFYAMNFFYGYVGNFGVSILIVTVIIKLLMFTLANKSYRSMKKMKNLQPEIDRIKNLYSDDKARLNQEIMALYKKEKVNPVAGCLPILVQIPLFFSIYKVLYVTIEMRQVPFYGWIKDLSAPDPTTIFNLFGLLPFSPPSFLMIGAWPILMAITMFLQQKMSPEPADPMQAQVMKFMPLIFLFMFSSFPVGLLIYWSWNNILSIIQQYYINKFN.

Transmembrane regions (helical) follow at residues Ile5 to Phe25, Ala334 to Phe354, Tyr357 to Phe377, Leu431 to Ile451, Leu476 to Leu496, and Phe522 to Trp542.

Belongs to the OXA1/ALB3/YidC family. Type 1 subfamily. In terms of assembly, interacts with the Sec translocase complex via SecD. Specifically interacts with transmembrane segments of nascent integral membrane proteins during membrane integration.

Its subcellular location is the cell inner membrane. In terms of biological role, required for the insertion and/or proper folding and/or complex formation of integral membrane proteins into the membrane. Involved in integration of membrane proteins that insert both dependently and independently of the Sec translocase complex, as well as at least some lipoproteins. Aids folding of multispanning membrane proteins. The protein is Membrane protein insertase YidC of Rickettsia felis (strain ATCC VR-1525 / URRWXCal2) (Rickettsia azadi).